The primary structure comprises 231 residues: Putative N-acetylmannosamine-6-phosphate 2-epimerase (231 aa).

The protein belongs to the NanE family.

It catalyses the reaction an N-acyl-D-glucosamine 6-phosphate = an N-acyl-D-mannosamine 6-phosphate. It functions in the pathway amino-sugar metabolism; N-acetylneuraminate degradation; D-fructose 6-phosphate from N-acetylneuraminate: step 3/5. Its function is as follows. Converts N-acetylmannosamine-6-phosphate (ManNAc-6-P) to N-acetylglucosamine-6-phosphate (GlcNAc-6-P). The protein is Putative N-acetylmannosamine-6-phosphate 2-epimerase of Listeria monocytogenes serotype 4b (strain F2365).